Reading from the N-terminus, the 122-residue chain is Large ribosomal subunit protein bL12 (122 aa).

The protein belongs to the bacterial ribosomal protein bL12 family. In terms of assembly, homodimer. Part of the ribosomal stalk of the 50S ribosomal subunit. Forms a multimeric L10(L12)X complex, where L10 forms an elongated spine to which 2 to 4 L12 dimers bind in a sequential fashion. Binds GTP-bound translation factors.

Its function is as follows. Forms part of the ribosomal stalk which helps the ribosome interact with GTP-bound translation factors. Is thus essential for accurate translation. The chain is Large ribosomal subunit protein bL12 from Aliivibrio fischeri (strain ATCC 700601 / ES114) (Vibrio fischeri).